Here is a 279-residue protein sequence, read N- to C-terminus: Thymidylate synthase (279 aa).

Residue 133 to 134 participates in dUMP binding; sequence RR. Catalysis depends on Cys154, which acts as the Nucleophile. DUMP is bound by residues 178–181, Asn189, and 219–221; these read RSND and HIY. Asp181 lines the (6R)-5,10-methylene-5,6,7,8-tetrahydrofolate pocket. A (6R)-5,10-methylene-5,6,7,8-tetrahydrofolate-binding site is contributed by Ala278.

It belongs to the thymidylate synthase family. Bacterial-type ThyA subfamily. In terms of assembly, homodimer.

It is found in the cytoplasm. It catalyses the reaction dUMP + (6R)-5,10-methylene-5,6,7,8-tetrahydrofolate = 7,8-dihydrofolate + dTMP. The protein operates within pyrimidine metabolism; dTTP biosynthesis. Functionally, catalyzes the reductive methylation of 2'-deoxyuridine-5'-monophosphate (dUMP) to 2'-deoxythymidine-5'-monophosphate (dTMP) while utilizing 5,10-methylenetetrahydrofolate (mTHF) as the methyl donor and reductant in the reaction, yielding dihydrofolate (DHF) as a by-product. This enzymatic reaction provides an intracellular de novo source of dTMP, an essential precursor for DNA biosynthesis. The sequence is that of Thymidylate synthase from Streptococcus mutans serotype c (strain ATCC 700610 / UA159).